We begin with the raw amino-acid sequence, 868 residues long: Rifampicin phosphotransferase (868 aa).

The tract at residues 1–313 (MSSFVLDFQE…IYIVQSRPIT (313 aa)) is ATP-binding. ATP-binding residues include K22, R116, G131, T135, Q182, E296, Q308, and R310. The tract at residues 326–756 (NHVYISVGHQ…TSDGEIITGK (431 aa)) is rifampicin-binding. The swivel phosphohistidine stretch occupies residues 769–867 (GLPVSSGVVE…VHGTEGYIEV (99 aa)). H827 functions as the Tele-phosphohistidine intermediate in the catalytic mechanism.

The protein belongs to the rifampicin phosphotransferase family.

It catalyses the reaction rifampicin + ATP + H2O = 21-phosphorifampicin + AMP + phosphate + 2 H(+). Its function is as follows. Catalyzes the phosphorylation of rifampicin, also known as rifampin (RIF), leading to its inactivation. Confers high level resistance to a variety of clinically used rifamycin antibiotics. Does not show phosphoenolpyruvate (PEP) synthase activity. The chain is Rifampicin phosphotransferase from Bacillus cereus (strain ATCC 14579 / DSM 31 / CCUG 7414 / JCM 2152 / NBRC 15305 / NCIMB 9373 / NCTC 2599 / NRRL B-3711).